The sequence spans 460 residues: GTPase Der (460 aa).

EngA-type G domains lie at 3 to 167 and 189 to 364; these read FTFA…PEPD and IRVA…AVWN. Residues 9–16, 56–60, 119–122, 195–202, 242–246, and 307–310 contribute to the GTP site; these read GRPNVGKS, DTAGL, NKSE, GRPNAGKS, and NKWD. The KH-like domain occupies 365–449; the sequence is TRVPTAALNR…PVRIMLREKA (85 aa).

It belongs to the TRAFAC class TrmE-Era-EngA-EngB-Septin-like GTPase superfamily. EngA (Der) GTPase family. In terms of assembly, associates with the 50S ribosomal subunit.

Functionally, GTPase that plays an essential role in the late steps of ribosome biogenesis. In Rhodopseudomonas palustris (strain BisB5), this protein is GTPase Der.